The following is a 166-amino-acid chain: NAD(P)H-quinone oxidoreductase subunit I, chloroplastic (166 aa).

2 consecutive 4Fe-4S ferredoxin-type domains span residues 55 to 84 and 95 to 124; these read GRIH…VDWQ and VNYS…MTEE. Positions 64, 67, 70, 74, 104, 107, 110, and 114 each coordinate [4Fe-4S] cluster.

The protein belongs to the complex I 23 kDa subunit family. NDH is composed of at least 16 different subunits, 5 of which are encoded in the nucleus. Requires [4Fe-4S] cluster as cofactor.

It is found in the plastid. The protein localises to the chloroplast thylakoid membrane. It carries out the reaction a plastoquinone + NADH + (n+1) H(+)(in) = a plastoquinol + NAD(+) + n H(+)(out). The catalysed reaction is a plastoquinone + NADPH + (n+1) H(+)(in) = a plastoquinol + NADP(+) + n H(+)(out). Functionally, NDH shuttles electrons from NAD(P)H:plastoquinone, via FMN and iron-sulfur (Fe-S) centers, to quinones in the photosynthetic chain and possibly in a chloroplast respiratory chain. The immediate electron acceptor for the enzyme in this species is believed to be plastoquinone. Couples the redox reaction to proton translocation, and thus conserves the redox energy in a proton gradient. This is NAD(P)H-quinone oxidoreductase subunit I, chloroplastic from Coreopsis petrophiloides (Tickseed).